We begin with the raw amino-acid sequence, 434 residues long: Serine--tRNA ligase (434 aa).

Residue 237 to 239 (TAE) participates in L-serine binding. 268–270 (RAE) contacts ATP. E291 contributes to the L-serine binding site. An ATP-binding site is contributed by 358-361 (EISS). S393 lines the L-serine pocket.

This sequence belongs to the class-II aminoacyl-tRNA synthetase family. Type-1 seryl-tRNA synthetase subfamily. In terms of assembly, homodimer. The tRNA molecule binds across the dimer.

The protein localises to the cytoplasm. The catalysed reaction is tRNA(Ser) + L-serine + ATP = L-seryl-tRNA(Ser) + AMP + diphosphate + H(+). It catalyses the reaction tRNA(Sec) + L-serine + ATP = L-seryl-tRNA(Sec) + AMP + diphosphate + H(+). It participates in aminoacyl-tRNA biosynthesis; selenocysteinyl-tRNA(Sec) biosynthesis; L-seryl-tRNA(Sec) from L-serine and tRNA(Sec): step 1/1. In terms of biological role, catalyzes the attachment of serine to tRNA(Ser). Is also able to aminoacylate tRNA(Sec) with serine, to form the misacylated tRNA L-seryl-tRNA(Sec), which will be further converted into selenocysteinyl-tRNA(Sec). This Rhodopseudomonas palustris (strain ATCC BAA-98 / CGA009) protein is Serine--tRNA ligase.